Consider the following 432-residue polypeptide: Enolase (432 aa).

Q167 is a binding site for (2R)-2-phosphoglycerate. E209 serves as the catalytic Proton donor. Mg(2+) contacts are provided by D246, E291, and D318. Residues K343, R372, S373, and K394 each contribute to the (2R)-2-phosphoglycerate site. The active-site Proton acceptor is K343.

This sequence belongs to the enolase family. As to quaternary structure, component of the RNA degradosome, a multiprotein complex involved in RNA processing and mRNA degradation. The cofactor is Mg(2+).

It is found in the cytoplasm. The protein resides in the secreted. Its subcellular location is the cell surface. The catalysed reaction is (2R)-2-phosphoglycerate = phosphoenolpyruvate + H2O. It functions in the pathway carbohydrate degradation; glycolysis; pyruvate from D-glyceraldehyde 3-phosphate: step 4/5. In terms of biological role, catalyzes the reversible conversion of 2-phosphoglycerate (2-PG) into phosphoenolpyruvate (PEP). It is essential for the degradation of carbohydrates via glycolysis. The protein is Enolase of Colwellia psychrerythraea (strain 34H / ATCC BAA-681) (Vibrio psychroerythus).